A 434-amino-acid chain; its full sequence is Methylenetetrahydrofolate--tRNA-(uracil-5-)-methyltransferase TrmFO (434 aa).

10–15 (GAGLAG) contacts FAD.

This sequence belongs to the MnmG family. TrmFO subfamily. It depends on FAD as a cofactor.

The protein resides in the cytoplasm. The enzyme catalyses uridine(54) in tRNA + (6R)-5,10-methylene-5,6,7,8-tetrahydrofolate + NADH + H(+) = 5-methyluridine(54) in tRNA + (6S)-5,6,7,8-tetrahydrofolate + NAD(+). The catalysed reaction is uridine(54) in tRNA + (6R)-5,10-methylene-5,6,7,8-tetrahydrofolate + NADPH + H(+) = 5-methyluridine(54) in tRNA + (6S)-5,6,7,8-tetrahydrofolate + NADP(+). Its function is as follows. Catalyzes the folate-dependent formation of 5-methyl-uridine at position 54 (M-5-U54) in all tRNAs. This is Methylenetetrahydrofolate--tRNA-(uracil-5-)-methyltransferase TrmFO from Bacillus cereus (strain ATCC 14579 / DSM 31 / CCUG 7414 / JCM 2152 / NBRC 15305 / NCIMB 9373 / NCTC 2599 / NRRL B-3711).